Here is a 327-residue protein sequence, read N- to C-terminus: Aspartate--ammonia ligase (327 aa).

Belongs to the class-II aminoacyl-tRNA synthetase family. AsnA subfamily.

The protein resides in the cytoplasm. The catalysed reaction is L-aspartate + NH4(+) + ATP = L-asparagine + AMP + diphosphate + H(+). It functions in the pathway amino-acid biosynthesis; L-asparagine biosynthesis; L-asparagine from L-aspartate (ammonia route): step 1/1. In Bacillus cereus (strain G9842), this protein is Aspartate--ammonia ligase.